Here is a 302-residue protein sequence, read N- to C-terminus: Nudix hydrolase 5 (302 aa).

The 133-residue stretch at 122–254 folds into the Nudix hydrolase domain; that stretch reads SHRIGIGAFV…EGNEMFKLIA (133 aa). Positions 159–180 match the Nudix box motif; it reads GTIKEGESIWAGAVREVKEETD. Mg(2+)-binding residues include Glu-174 and Glu-178.

The protein belongs to the Nudix hydrolase family. The cofactor is Mg(2+). Requires Mn(2+) as cofactor. As to expression, expressed in roots, stems and leaves.

Functionally, probably mediates the hydrolysis of some nucleoside diphosphate derivatives. The protein is Nudix hydrolase 5 (NUDT5) of Arabidopsis thaliana (Mouse-ear cress).